The primary structure comprises 80 residues: U-actitoxin-Avd9b (80 aa).

A signal peptide spans 1 to 20; sequence MNLKVLAVFVLCAILVVVTA. A propeptide spanning residues 21-39 is cleaved from the precursor; that stretch reads ERRGTETGGYKKDTLQDLK. The 36-residue stretch at 45 to 80 folds into the ShKT domain; sequence CFDRYREAACTSDNIRLLCKTSAKYQINCKKSCGLC. Disulfide bonds link C45/C80, C54/C73, and C63/C77. Positions 68–69 are crucial for binding to potassium channels; the sequence is KY.

It belongs to the sea anemone type 1 potassium channel toxin family. Type 1b subfamily.

It localises to the secreted. Its subcellular location is the nematocyst. In terms of biological role, inhibits voltage-gated potassium channels (Kv1/KCNA). The chain is U-actitoxin-Avd9b from Anemonia viridis (Snakelocks anemone).